We begin with the raw amino-acid sequence, 1594 residues long: Protein SHORTAGE IN CHIASMATA 1 (1594 aa).

5 disordered regions span residues 1148–1180 (DSRS…SKKK), 1239–1283 (APFK…QPDF), 1396–1426 (AADI…YADN), 1491–1523 (RSRA…NTKR), and 1536–1594 (GGNK…LVWK). Residues 1151 to 1165 (SVMTDSSSSVSSGPD) show a composition bias toward low complexity. Basic and acidic residues-rich tracts occupy residues 1254 to 1265 (PSKDPERFDKKS) and 1402 to 1414 (SSER…DSKY). A compositionally biased stretch (polar residues) spans 1577-1594 (QSLSYTANGTGQTKLVWK).

It belongs to the XPF family. Interacts with PTD. In terms of tissue distribution, highest levels in young buds, where male meiosis occurs. Also present at low levels in plantlets, leaves, flowers, and roots.

The protein localises to the nucleus. Functionally, essential for the formation of class I meiotic crossovers. The chain is Protein SHORTAGE IN CHIASMATA 1 from Arabidopsis thaliana (Mouse-ear cress).